Reading from the N-terminus, the 354-residue chain is Uroporphyrinogen decarboxylase (354 aa).

Residues 27-31 (RQAGR), aspartate 77, tyrosine 154, serine 209, and histidine 327 contribute to the substrate site.

Belongs to the uroporphyrinogen decarboxylase family. As to quaternary structure, homodimer.

Its subcellular location is the cytoplasm. The enzyme catalyses uroporphyrinogen III + 4 H(+) = coproporphyrinogen III + 4 CO2. It functions in the pathway porphyrin-containing compound metabolism; protoporphyrin-IX biosynthesis; coproporphyrinogen-III from 5-aminolevulinate: step 4/4. In terms of biological role, catalyzes the decarboxylation of four acetate groups of uroporphyrinogen-III to yield coproporphyrinogen-III. In Shewanella piezotolerans (strain WP3 / JCM 13877), this protein is Uroporphyrinogen decarboxylase.